The primary structure comprises 860 residues: Linoleate 9S-lipoxygenase A (860 aa).

A PLAT domain is found at 29 to 159; sequence NALDFTDLAG…RYKSDRIFFA (131 aa). A Lipoxygenase domain is found at 162–860; the sequence is PYLPSETPEL…GKGIPNSVSI (699 aa). The segment at 209–246 is disordered; sequence PDQGKENVRTTLGGSADYPYPRRGRTGRPPTRTDPKSE. Positions 521, 526, 712, 716, and 860 each coordinate Fe cation.

Belongs to the lipoxygenase family. Monomer. The cofactor is Fe cation. In terms of tissue distribution, expressed in germinating seeds as well as in ripening fruit.

It localises to the cytoplasm. It carries out the reaction (9Z,12Z)-octadecadienoate + O2 = (9S)-hydroperoxy-(10E,12Z)-octadecadienoate. Its pathway is lipid metabolism; oxylipin biosynthesis. Plant lipoxygenase may be involved in a number of diverse aspects of plant physiology including growth and development, pest resistance, and senescence or responses to wounding. It catalyzes the hydroperoxidation of lipids containing a cis,cis-1,4-pentadiene structure. The protein is Linoleate 9S-lipoxygenase A (LOX1.1) of Solanum lycopersicum (Tomato).